The primary structure comprises 137 residues: Large-conductance mechanosensitive channel (137 aa).

2 consecutive transmembrane segments (helical) span residues 9-29 and 79-99; these read AFAVKGNVVDMAVGIIIGAAF and IQTILDFVIVAFAIFMGVKAI.

This sequence belongs to the MscL family. In terms of assembly, homopentamer.

The protein localises to the cell inner membrane. Channel that opens in response to stretch forces in the membrane lipid bilayer. May participate in the regulation of osmotic pressure changes within the cell. The sequence is that of Large-conductance mechanosensitive channel from Pseudomonas aeruginosa (strain UCBPP-PA14).